Reading from the N-terminus, the 394-residue chain is Elongation factor Tu 1 (394 aa).

One can recognise a tr-type G domain in the interval 10–204 (KPHVNVGTIG…ALDSYIPEPE (195 aa)). Residues 19 to 26 (GHVDHGKT) form a G1 region. Residue 19–26 (GHVDHGKT) coordinates GTP. Residue threonine 26 participates in Mg(2+) binding. The interval 60-64 (GITIN) is G2. A G3 region spans residues 81–84 (DCPG). Residues 81 to 85 (DCPGH) and 136 to 139 (NKCD) each bind GTP. Positions 136 to 139 (NKCD) are G4. Residues 174–176 (SAL) form a G5 region.

The protein belongs to the TRAFAC class translation factor GTPase superfamily. Classic translation factor GTPase family. EF-Tu/EF-1A subfamily. Monomer.

Its subcellular location is the cytoplasm. The enzyme catalyses GTP + H2O = GDP + phosphate + H(+). In terms of biological role, GTP hydrolase that promotes the GTP-dependent binding of aminoacyl-tRNA to the A-site of ribosomes during protein biosynthesis. In Shewanella oneidensis (strain ATCC 700550 / JCM 31522 / CIP 106686 / LMG 19005 / NCIMB 14063 / MR-1), this protein is Elongation factor Tu 1.